The primary structure comprises 153 residues: 6,7-dimethyl-8-ribityllumazine synthase (153 aa).

5-amino-6-(D-ribitylamino)uracil contacts are provided by residues F22, 56-58, and 80-82; these read AFE and TVI. Residue 85-86 coordinates (2S)-2-hydroxy-3-oxobutyl phosphate; sequence ST. The Proton donor role is filled by H88. F113 is a 5-amino-6-(D-ribitylamino)uracil binding site. R127 is a (2S)-2-hydroxy-3-oxobutyl phosphate binding site.

Belongs to the DMRL synthase family. Forms an icosahedral capsid composed of 60 subunits, arranged as a dodecamer of pentamers.

The enzyme catalyses (2S)-2-hydroxy-3-oxobutyl phosphate + 5-amino-6-(D-ribitylamino)uracil = 6,7-dimethyl-8-(1-D-ribityl)lumazine + phosphate + 2 H2O + H(+). Its pathway is cofactor biosynthesis; riboflavin biosynthesis; riboflavin from 2-hydroxy-3-oxobutyl phosphate and 5-amino-6-(D-ribitylamino)uracil: step 1/2. In terms of biological role, catalyzes the formation of 6,7-dimethyl-8-ribityllumazine by condensation of 5-amino-6-(D-ribitylamino)uracil with 3,4-dihydroxy-2-butanone 4-phosphate. This is the penultimate step in the biosynthesis of riboflavin. This chain is 6,7-dimethyl-8-ribityllumazine synthase, found in Actinobacillus pleuropneumoniae serotype 5b (strain L20).